A 431-amino-acid polypeptide reads, in one-letter code: Adenylosuccinate lyase (431 aa).

N(6)-(1,2-dicarboxyethyl)-AMP contacts are provided by residues 4 to 5 (RY), 67 to 69 (RHD), and 93 to 94 (TS). His-141 (proton donor/acceptor) is an active-site residue. Gln-212 contributes to the N(6)-(1,2-dicarboxyethyl)-AMP binding site. The active-site Proton donor/acceptor is the Ser-262. Residues Ser-263, 268 to 270 (KRN), Asn-276, and 307 to 311 (SAERI) each bind N(6)-(1,2-dicarboxyethyl)-AMP.

This sequence belongs to the lyase 1 family. Adenylosuccinate lyase subfamily. Homotetramer. Residues from neighboring subunits contribute catalytic and substrate-binding residues to each active site.

The catalysed reaction is N(6)-(1,2-dicarboxyethyl)-AMP = fumarate + AMP. The enzyme catalyses (2S)-2-[5-amino-1-(5-phospho-beta-D-ribosyl)imidazole-4-carboxamido]succinate = 5-amino-1-(5-phospho-beta-D-ribosyl)imidazole-4-carboxamide + fumarate. The protein operates within purine metabolism; AMP biosynthesis via de novo pathway; AMP from IMP: step 2/2. It participates in purine metabolism; IMP biosynthesis via de novo pathway; 5-amino-1-(5-phospho-D-ribosyl)imidazole-4-carboxamide from 5-amino-1-(5-phospho-D-ribosyl)imidazole-4-carboxylate: step 2/2. Its function is as follows. Catalyzes two reactions in de novo purine nucleotide biosynthesis. Catalyzes the breakdown of 5-aminoimidazole- (N-succinylocarboxamide) ribotide (SAICAR or 2-[5-amino-1-(5-phospho-beta-D-ribosyl)imidazole-4-carboxamido]succinate) to 5-aminoimidazole-4-carboxamide ribotide (AICAR or 5-amino-1-(5-phospho-beta-D-ribosyl)imidazole-4-carboxamide) and fumarate, and of adenylosuccinate (ADS or N(6)-(1,2-dicarboxyethyl)-AMP) to adenosine monophosphate (AMP) and fumarate. Influences the affinity of glutamyl--tRNA ligase for its substrates and increases its thermostability. This chain is Adenylosuccinate lyase (purB), found in Bacillus subtilis (strain 168).